A 726-amino-acid chain; its full sequence is Transferrin (726 aa).

A signal peptide spans Met1–Ala16. Transferrin-like domains are found at residues Tyr29–Thr367 and Val374–Ala719. Disulfide bonds link Cys32/Cys63 and Cys41/Cys54. The Fe(3+) site is built by Asp78 and Tyr111. 4 disulfides stabilise this stretch: Cys135–Cys231, Cys184–Cys210, Cys207–Cys216, and Cys274–Cys287. 4 residues coordinate hydrogencarbonate: Thr137, Arg141, Val143, and Gly144. N-linked (GlcNAc...) asparagine glycosylation occurs at Asn162. Position 225 (Tyr225) interacts with Fe(3+). N-linked (GlcNAc...) asparagine glycosylation is found at Asn337 and Asn358. Cystine bridges form between Cys377-Cys414 and Cys387-Cys405. Positions 429 and 457 each coordinate Fe(3+). An intrachain disulfide couples Cys481 to Cys562. Residues Thr483, Arg487, Ala489, and Gly490 each contribute to the hydrogencarbonate site. Fe(3+) is bound by residues Tyr573 and His642.

The protein belongs to the transferrin family.

The protein localises to the secreted. Its function is as follows. Transferrins are iron binding transport proteins which bind Fe(3+) ion in association with the binding of an anion, usually bicarbonate. The polypeptide is Transferrin (Blaberus discoidalis (Tropical cockroach)).